Reading from the N-terminus, the 517-residue chain is Ribose import ATP-binding protein RbsA (517 aa).

ABC transporter domains are found at residues 11-251 and 263-507; these read LEMR…VGRD and YDPG…ALAT. 43–50 contacts ATP; the sequence is GENGAGKS.

It belongs to the ABC transporter superfamily. Ribose importer (TC 3.A.1.2.1) family. The complex is composed of an ATP-binding protein (RbsA), two transmembrane proteins (RbsC) and a solute-binding protein (RbsB).

It localises to the cell inner membrane. The catalysed reaction is D-ribose(out) + ATP + H2O = D-ribose(in) + ADP + phosphate + H(+). Functionally, part of the ABC transporter complex RbsABC involved in ribose import. Responsible for energy coupling to the transport system. This chain is Ribose import ATP-binding protein RbsA, found in Burkholderia pseudomallei (strain K96243).